Consider the following 130-residue polypeptide: Methylglyoxal synthase (130 aa).

An MGS-like domain is found at 1-130; it reads MSKPRIALIA…DLARNMQDVC (130 aa). Residues His-11, Lys-15, 37–40, and 57–58 contribute to the substrate site; these read TGTT and SG. Asp-63 functions as the Proton donor/acceptor in the catalytic mechanism. Residue His-90 participates in substrate binding.

Belongs to the methylglyoxal synthase family.

The catalysed reaction is dihydroxyacetone phosphate = methylglyoxal + phosphate. Functionally, catalyzes the formation of methylglyoxal from dihydroxyacetone phosphate. The protein is Methylglyoxal synthase of Burkholderia orbicola (strain AU 1054).